Reading from the N-terminus, the 330-residue chain is Catharanthine synthase (330 aa).

Positions 81–83 (HGA) match the Involved in the stabilization of the negatively charged intermediate by the formation of the oxyanion hole motif. G84 provides a ligand contact to catharanthine. The Proton acceptor role is filled by S173. D274 is a catalytic residue. Y305 serves as a coordination point for catharanthine. Catalysis depends on Y305, which acts as the Proton donor/acceptor.

This sequence belongs to the 'GDXG' lipolytic enzyme family. Interacts with dehydroprecondylocarpine acetate synthase (DPAS). As to expression, expressed in leaf epidermis.

The protein resides in the cytoplasm. The protein localises to the cytosol. It localises to the nucleus. It catalyses the reaction dehydrosecodine = catharanthine. The protein operates within alkaloid biosynthesis. In terms of biological role, component of iboga and aspidosperma monoterpenoid indole alkaloids (MIAs, e.g. tabersonine and catharanthine) biosynthesis pathway from 19E-geissoschizine, psychoactive compounds likely to be used in the treatment of opioid dependence. Catalyzes the conversion of dehydrosecodine to catharanthine. The polypeptide is Catharanthine synthase (Catharanthus roseus (Madagascar periwinkle)).